A 246-amino-acid chain; its full sequence is DNA repair protein RecO (246 aa).

It belongs to the RecO family.

Involved in DNA repair and RecF pathway recombination. This Maridesulfovibrio salexigens (strain ATCC 14822 / DSM 2638 / NCIMB 8403 / VKM B-1763) (Desulfovibrio salexigens) protein is DNA repair protein RecO.